An 86-amino-acid chain; its full sequence is Probable acyl carrier protein CCNA_01221 (86 aa).

Positions 6-83 constitute a Carrier domain; it reads TVTDLSLREI…DLSKLINDLR (78 aa). The residue at position 43 (Ser-43) is an O-(pantetheine 4'-phosphoryl)serine.

Belongs to the acyl carrier protein (ACP) family.

Its pathway is lipid metabolism; sphingolipid metabolism. Its function is as follows. Involved in de novo bacterial ceramide synthesis. This Caulobacter vibrioides (strain NA1000 / CB15N) (Caulobacter crescentus) protein is Probable acyl carrier protein CCNA_01221.